A 321-amino-acid chain; its full sequence is Serine protease 52 (321 aa).

Residues 1-27 (MKRWKDRRTGLLLPLVLLLFGACSSLA) form the signal peptide. The region spanning 56 to 287 (IVGGKPANIL…YVRWISKQTA (232 aa)) is the Peptidase S1 domain. Cys81 and Cys97 are disulfide-bonded. Active-site charge relay system residues include His96 and Asp142. Residue Asn153 is glycosylated (N-linked (GlcNAc...) asparagine). Disulfide bonds link Cys175/Cys242, Cys208/Cys221, and Cys232/Cys263. Residue Ser236 is the Charge relay system of the active site. A helical membrane pass occupies residues 300–320 (ACPLVLSCRAILFLYFVMFLL).

Belongs to the peptidase S1 family.

The protein localises to the membrane. Functionally, probable serine protease. This Mus musculus (Mouse) protein is Serine protease 52 (Prss52).